The following is a 418-amino-acid chain: D-inositol 3-phosphate glycosyltransferase 1 (418 aa).

UDP-N-acetyl-alpha-D-glucosamine contacts are provided by residues 24–25 and Gly32; that span reads QP. 1D-myo-inositol 3-phosphate-binding positions include 29 to 34, Lys87, His115, Ser139, and Gln159; that span reads DAGGLN. Positions 233 and 238 each coordinate UDP-N-acetyl-alpha-D-glucosamine. Mg(2+) contacts are provided by Tyr308, Arg309, and Ala311. Glu321 and Glu329 together coordinate UDP-N-acetyl-alpha-D-glucosamine. Mg(2+) is bound at residue Thr335.

It belongs to the glycosyltransferase group 1 family. MshA subfamily. Homodimer.

The catalysed reaction is 1D-myo-inositol 3-phosphate + UDP-N-acetyl-alpha-D-glucosamine = 1D-myo-inositol 2-acetamido-2-deoxy-alpha-D-glucopyranoside 3-phosphate + UDP + H(+). Catalyzes the transfer of a N-acetyl-glucosamine moiety to 1D-myo-inositol 3-phosphate to produce 1D-myo-inositol 2-acetamido-2-deoxy-glucopyranoside 3-phosphate in the mycothiol biosynthesis pathway. The chain is D-inositol 3-phosphate glycosyltransferase 1 from Catenulispora acidiphila (strain DSM 44928 / JCM 14897 / NBRC 102108 / NRRL B-24433 / ID139908).